Here is a 180-residue protein sequence, read N- to C-terminus: MQALPTILPPPPLPDDSEAPARTPEKHANLVRFQSELEFIQCLAHPQYLHELHIQGYLGKPAFLNYLKYLEYWREPQYVRFIIYPTCLVYLTLLQTELFRSRLGDMGFITELMRVGSRHHATWRVGKPAEDKQSEEKPAVSMAPLDDDEEEDEPERGQETKGKRKKKKSRSGNVGAGQAL.

Disordered regions lie at residues 1–24 (MQAL…ARTP) and 123–180 (WRVG…GQAL). A compositionally biased stretch (basic and acidic residues) spans 127–138 (KPAEDKQSEEKP). Residues 145–154 (LDDDEEEDEP) show a composition bias toward acidic residues.

This sequence belongs to the Mediator complex subunit 31 family. As to quaternary structure, component of the Mediator complex.

The protein resides in the nucleus. In terms of biological role, component of the Mediator complex, a coactivator involved in the regulated transcription of nearly all RNA polymerase II-dependent genes. Mediator functions as a bridge to convey information from gene-specific regulatory proteins to the basal RNA polymerase II transcription machinery. Mediator is recruited to promoters by direct interactions with regulatory proteins and serves as a scaffold for the assembly of a functional preinitiation complex with RNA polymerase II and the general transcription factors. In Cryptococcus neoformans var. neoformans serotype D (strain B-3501A) (Filobasidiella neoformans), this protein is Mediator of RNA polymerase II transcription subunit 31 (SOH1).